The primary structure comprises 1010 residues: Plasma membrane ATPase 2 (1010 aa).

Residues 1–14 show a composition bias toward basic and acidic residues; sequence MQRNNGEGRPEGMH. Disordered regions lie at residues 1 to 126 and 139 to 165; these read MQRN…EDED and QDQE…PEEL. Residues 1 to 201 are Cytoplasmic-facing; that stretch reads MQRNNGEGRP…KEEKTNNIKK (201 aa). A compositionally biased stretch (polar residues) spans 25–34; that stretch reads FKNNASPQDD. Over residues 42 to 52 the composition is skewed to acidic residues; that stretch reads YEEGGVEDSAV. The segment covering 68-106 has biased composition (polar residues); the sequence is APNTHAQQANLQSGNTSITHETQSTSRGQEATTSPSLSA. Positions 140–151 are enriched in acidic residues; it reads DQEEEQVEEEES. Residues 202–222 form a helical membrane-spanning segment; sequence FLSFFVGPIQFVMELAAALAA. The Extracellular portion of the chain corresponds to 223–226; it reads GLRD. Residues 227–246 traverse the membrane as a helical segment; that stretch reads WVDFGVICALLLLNATVGFV. Over 247–377 the chain is Cytoplasmic; that stretch reads QEYQAGSIVD…SQGHFTEVLN (131 aa). A helical transmembrane segment spans residues 378 to 399; the sequence is GIGTILLVLVILTLLCIYTAAF. Topologically, residues 400–410 are extracellular; it reads YRSVRLAALLE. A helical transmembrane segment spans residues 411–433; sequence YTLAITIIGVPVGLPAVVTTTMA. Residues 434–805 are Cytoplasmic-facing; it reads VGAAYLAKKK…LIIRNQLLNL (372 aa). The 4-aspartylphosphate intermediate role is filled by Asp464. Mg(2+)-binding residues include Asp720 and Asp724. Residues 806–824 traverse the membrane as a helical segment; it reads ELIVFIAIFADVATLAIAY. Residues 825–840 are Extracellular-facing; the sequence is DNAPYAMKPVKWNLPR. The chain crosses the membrane as a helical span at residues 841–860; the sequence is LWGLATIVGILLAIGTWIVN. The Cytoplasmic portion of the chain corresponds to 861–912; that stretch reads TTMIAQGQNRGIVQNFGVQDEVLFLQISLTENWLIFITRCSGPFWSSFPSWQ. The helical transmembrane segment at 913–933 threads the bilayer; the sequence is LSGAVLVVDILATLFCIFGWF. The Extracellular segment spans residues 934–946; that stretch reads KGGHQTSIVAVIR. The helical transmembrane segment at 947 to 963 threads the bilayer; the sequence is IWMYSFGIFCLIAGVYY. The Cytoplasmic segment spans residues 964-1010; it reads ILSESSSFDRWMHGKHKERGTTRKLEDFVMQLQRTSTHHEAEGKVTS.

Belongs to the cation transport ATPase (P-type) (TC 3.A.3) family. Type IIIA subfamily. In addition to transient phosphorylation of the active site Asp residue, this protein, but not the product of the pma1 locus, is phosphorylated efficiently in isolated plasma membrane.

It is found in the cell membrane. It carries out the reaction ATP + H2O + H(+)(in) = ADP + phosphate + 2 H(+)(out). In terms of biological role, the plasma membrane ATPase of plants and fungi is a hydrogen ion pump. The proton gradient it generates drives the active transport of nutrients by H(+)-symport. The resulting external acidification and/or internal alkinization may mediate growth responses. The sequence is that of Plasma membrane ATPase 2 (pma2) from Schizosaccharomyces pombe (strain 972 / ATCC 24843) (Fission yeast).